A 151-amino-acid polypeptide reads, in one-letter code: Calmodulin (151 aa).

4 EF-hand domains span residues 10–45, 46–81, 83–118, and 119–151; these read EQIS…LGQN, PTEA…KMKD, DSEE…LGEK, and LTDE…MLSK. Ca(2+) contacts are provided by Asp23, Asp25, Asp27, Ser29, Glu34, Asp59, Asp61, Asn63, Thr65, Glu70, Asp96, Asp98, Asn100, Glu107, Asp132, Asp134, Asp136, and Glu143.

This sequence belongs to the calmodulin family.

Calmodulin mediates the control of a large number of enzymes, ion channels and other proteins by Ca(2+). Among the enzymes to be stimulated by the calmodulin-Ca(2+) complex are a number of protein kinases and phosphatases. In Pneumocystis carinii, this protein is Calmodulin.